The chain runs to 313 residues: Ribosomal RNA small subunit methyltransferase H (313 aa).

S-adenosyl-L-methionine contacts are provided by residues 35-37, aspartate 55, phenylalanine 79, aspartate 101, and glutamine 108; that span reads GGH.

Belongs to the methyltransferase superfamily. RsmH family.

The protein resides in the cytoplasm. It catalyses the reaction cytidine(1402) in 16S rRNA + S-adenosyl-L-methionine = N(4)-methylcytidine(1402) in 16S rRNA + S-adenosyl-L-homocysteine + H(+). Its function is as follows. Specifically methylates the N4 position of cytidine in position 1402 (C1402) of 16S rRNA. This Klebsiella pneumoniae (strain 342) protein is Ribosomal RNA small subunit methyltransferase H.